The following is a 292-amino-acid chain: tRNA(Ile)-lysidine synthase (292 aa).

Position 32–37 (32–37 (SGGADS)) interacts with ATP.

It belongs to the tRNA(Ile)-lysidine synthase family.

The protein localises to the cytoplasm. It carries out the reaction cytidine(34) in tRNA(Ile2) + L-lysine + ATP = lysidine(34) in tRNA(Ile2) + AMP + diphosphate + H(+). In terms of biological role, ligates lysine onto the cytidine present at position 34 of the AUA codon-specific tRNA(Ile) that contains the anticodon CAU, in an ATP-dependent manner. Cytidine is converted to lysidine, thus changing the amino acid specificity of the tRNA from methionine to isoleucine. This Corynebacterium diphtheriae (strain ATCC 700971 / NCTC 13129 / Biotype gravis) protein is tRNA(Ile)-lysidine synthase.